The chain runs to 316 residues: Fe-S cluster assembly protein DRE2 (316 aa).

The interval 7-139 (VSPPKRTLLL…PDYGDNEGAV (133 aa)) is N-terminal SAM-like domain. The interval 140-208 (TLKFGLKKKN…EDTLMTEEDL (69 aa)) is linker. Residues C218, C229, C232, and C234 each contribute to the [2Fe-2S] cluster site. Residues 218 to 234 (CQPKAGKRRRACKDCSC) form a fe-S binding site A region. [4Fe-4S] cluster-binding residues include C279, C282, C290, and C293. Short sequence motifs (cx2C motif) lie at residues 279–282 (CGNC) and 290–293 (CDGC). The fe-S binding site B stretch occupies residues 279–293 (CGNCSLGDAFRCDGC).

It belongs to the anamorsin family. As to quaternary structure, monomer. Interacts with TAH18. Interacts with MIA40. Requires [2Fe-2S] cluster as cofactor. [4Fe-4S] cluster is required as a cofactor.

The protein resides in the cytoplasm. Its subcellular location is the mitochondrion intermembrane space. Component of the cytosolic iron-sulfur (Fe-S) protein assembly (CIA) machinery required for the maturation of extramitochondrial Fe-S proteins. Part of an electron transfer chain functioning in an early step of cytosolic Fe-S biogenesis, facilitating the de novo assembly of a [4Fe-4S] cluster on the scaffold complex CFD1-NBP35. Electrons are transferred to DRE2 from NADPH via the FAD- and FMN-containing protein TAH18. TAH18-DRE2 are also required for the assembly of the diferric tyrosyl radical cofactor of ribonucleotide reductase (RNR), probably by providing electrons for reduction during radical cofactor maturation in the catalytic small subunit RNR2. The sequence is that of Fe-S cluster assembly protein DRE2 from Fusarium vanettenii (strain ATCC MYA-4622 / CBS 123669 / FGSC 9596 / NRRL 45880 / 77-13-4) (Fusarium solani subsp. pisi).